A 780-amino-acid polypeptide reads, in one-letter code: cGMP-dependent protein kinase egl-4 (780 aa).

2 disordered regions span residues 1–55 (MSSG…QVQV) and 119–143 (EQKA…DQLG). Positions 9 to 35 (SGGGGGGGGASGGAGGGAPGGGGGGIR) are enriched in gly residues. The span at 46-55 (DQPNGNQVQV) shows a compositional bias: polar residues. Positions 61–127 (EAHELQKLIP…LEQKAQSAAS (67 aa)) form a coiled coil. 3',5'-cyclic GMP-binding positions include 265-268 (GELA), 275-276 (RT), arginine 380, 389-392 (GERA), 399-400 (RT), and tyrosine 434. One can recognise a Protein kinase domain in the interval 469-729 (VKRLATLGVG…VNDIRKHRWF (261 aa)). ATP-binding positions include 475–483 (LGVGGFGRV) and lysine 499. Residues 492 to 504 (KAKTFALKALKKK) carry the Nuclear localization signal motif. Aspartate 593 acts as the Proton acceptor in catalysis. The AGC-kinase C-terminal domain occupies 730-780 (MGFDWEGLRSRTLKPPILPKVSNPADVTNFDNYPPDNDVPPDEFSGWDEGF). The tract at residues 757–780 (TNFDNYPPDNDVPPDEFSGWDEGF) is disordered.

The protein belongs to the protein kinase superfamily. AGC Ser/Thr protein kinase family. cGMP subfamily. In terms of assembly, when phosphorylated, interacts with saeg-2. May interact with saeg-1. Mg(2+) is required as a cofactor. Autophosphorylated. In terms of tissue distribution, expressed in AWC sensory neurons (at protein level). Mainly expressed in head neurons, hypodermis, intestine and body wall muscles. L2 and L3 larvae show extensive expression, lower levels are observed in L4 larvae, later embryos and adults. Isoform c is expressed in a subset of neurons in the head, nerve ring, and ventral nerve cord including some motor neurons, also in several neurons in the tail, the pharyngeal marginal cells, body muscle, intestine, vulval muscles, and spermatheca.

It localises to the cytoplasm. The protein localises to the nucleus. It catalyses the reaction L-seryl-[protein] + ATP = O-phospho-L-seryl-[protein] + ADP + H(+). The enzyme catalyses L-threonyl-[protein] + ATP = O-phospho-L-threonyl-[protein] + ADP + H(+). With respect to regulation, binding of cGMP results in enzyme activation. In terms of biological role, promotes chemoreceptor gene expression in response to increased cGMP levels by antagonizing the gene repression functions of the class II HDAC hda-4 and the mef-2 transcription factor. Regulates gene expression via recruitment of a histone deacetylase complex containing hda-2, saeg-1 and saeg-2. Represses body size and lifespan through the dbl-1 and insulin pathways, respectively. May also signal through daf-3 and/or daf-5. Role in egg-laying, dauer formation and motility. Regulates behavioral responses to various chemosensory stimuli in sensory neurons. Required for the initiation of long term adaptation to prolonged odor exposure which results in a decrease in odor seeking behavior. May regulate this process by phosphorylating tax-2, a subunit of cyclic nucleotide-gated channel tax-2/tax-4. In ASH sensory neurons, negatively regulates avoidance behavior to some bitter tastants, such as quinine, probably by phosphorylating rgs-2 and rgs-3 which are 2 regulator of G-protein signaling proteins. In AWB sensory neurons, involved in avoidance behavior to some repellent odors. In ASE left (ASEL) sensory neuron, involved in the sensing of environmental alkalinity downstream of receptor-type guanylate cyclase gcy-14. In sensory neurons, involved in the signaling pathway downstream of insulin, TGF-beta and receptor-type guanylate cyclase responsible for inducing quiescence after food intake. Might play a role in aversive olfactory learning in AWC neurons when an odor is associated with food deprivation, depending on the ins-1/age-1 signal from the AIA to the AWC neurons. Probably by regulating neuronal transmission downstream of lin-3 and receptor lin-23 and phospholipase plc-3 in ALA neurons, involved in the decrease in locomotion during the quiescent state that precedes each larval molt. The chain is cGMP-dependent protein kinase egl-4 from Caenorhabditis elegans.